The chain runs to 568 residues: Protein disconnected (568 aa).

Residues 16 to 77 (GHGPHSHQHV…PRRWGSPPIN (62 aa)) are disordered. The segment covering 19 to 29 (PHSHQHVHSHL) has biased composition (basic residues). Residues 30–45 (PSHPQPNAASPASSPG) show a composition bias toward low complexity. The span at 46–62 (GSSGSGSGSAAGSGTGS) shows a compositional bias: gly residues. 2 consecutive C2H2-type zinc fingers follow at residues 92-115 (VQCS…SAVH) and 120-145 (HKCT…ANPN). 4 disordered regions span residues 134-157 (RRSR…RRKI), 220-364 (LLST…SDAF), 391-419 (SSAS…DSDS), and 501-568 (QQYN…PISV). A compositionally biased stretch (acidic residues) spans 235–246 (NEQDADPEDDND). The span at 253 to 263 (QANSSSPAASS) shows a compositional bias: polar residues. Low complexity predominate over residues 282 to 292 (SLSLASSSSIA). Residues 313–360 (SEQDREQEQEQEQEREREAEKEQEQDVESDKEHEPEQEHELEREKRSP) show a composition bias toward basic and acidic residues. The segment covering 391-402 (SSASSSSASASA) has biased composition (low complexity). Residues 520 to 550 (HLTLSHHHQEQHHHLGHHHMGHHHHHHHQHH) show a composition bias toward basic residues. The span at 558–568 (SPAATNAPISV) shows a compositional bias: polar residues.

Expressed at low levels in the adult head and very low, but detectable, levels in the body.

It localises to the nucleus. Required for the establishment of stable connections between the larval optic nerves, the Bolwig's nerves, and their target cells in the brain during embryonic development. This is Protein disconnected (disco) from Drosophila melanogaster (Fruit fly).